The primary structure comprises 298 residues: N-acetylmuramic acid 6-phosphate etherase (298 aa).

One can recognise an SIS domain in the interval 55-218 (IHTQVSGGGR…STGLMIKSGK (164 aa)). The active-site Proton donor is the Glu83. The active site involves Glu114.

This sequence belongs to the GCKR-like family. MurNAc-6-P etherase subfamily. In terms of assembly, homodimer.

It catalyses the reaction N-acetyl-D-muramate 6-phosphate + H2O = N-acetyl-D-glucosamine 6-phosphate + (R)-lactate. It functions in the pathway amino-sugar metabolism; 1,6-anhydro-N-acetylmuramate degradation. The protein operates within amino-sugar metabolism; N-acetylmuramate degradation. Its pathway is cell wall biogenesis; peptidoglycan recycling. Specifically catalyzes the cleavage of the D-lactyl ether substituent of MurNAc 6-phosphate, producing GlcNAc 6-phosphate and D-lactate. Together with AnmK, is also required for the utilization of anhydro-N-acetylmuramic acid (anhMurNAc) either imported from the medium or derived from its own cell wall murein, and thus plays a role in cell wall recycling. The polypeptide is N-acetylmuramic acid 6-phosphate etherase (Escherichia coli O127:H6 (strain E2348/69 / EPEC)).